Reading from the N-terminus, the 89-residue chain is Co-chaperonin GroES (89 aa).

It belongs to the GroES chaperonin family. Heptamer of 7 subunits arranged in a ring. Interacts with the chaperonin GroEL.

The protein resides in the cytoplasm. Together with the chaperonin GroEL, plays an essential role in assisting protein folding. The GroEL-GroES system forms a nano-cage that allows encapsulation of the non-native substrate proteins and provides a physical environment optimized to promote and accelerate protein folding. GroES binds to the apical surface of the GroEL ring, thereby capping the opening of the GroEL channel. This is Co-chaperonin GroES from Wolinella succinogenes (strain ATCC 29543 / DSM 1740 / CCUG 13145 / JCM 31913 / LMG 7466 / NCTC 11488 / FDC 602W) (Vibrio succinogenes).